The following is a 340-amino-acid chain: Nod factor export ATP-binding protein I (340 aa).

The span at 1-24 (MLKRKLGPEDLRRLETPAIERESH) shows a compositional bias: basic and acidic residues. Residues 1 to 34 (MLKRKLGPEDLRRLETPAIERESHGQTSAKSSVP) form a disordered region. Polar residues predominate over residues 25-34 (GQTSAKSSVP). The 231-residue stretch at 42–272 (VDFAGVTKSY…HIGCQVMEIY (231 aa)) folds into the ABC transporter domain. 74–81 (GPNGAGKS) is an ATP binding site.

It belongs to the ABC transporter superfamily. Lipooligosaccharide exporter (TC 3.A.1.102) family. As to quaternary structure, the complex is composed of two ATP-binding proteins (NodI) and two transmembrane proteins (NodJ).

The protein resides in the cell inner membrane. Its function is as follows. Part of the ABC transporter complex NodIJ involved in the export of the nodulation factors (Nod factors), the bacterial signal molecules that induce symbiosis and subsequent nodulation induction. Nod factors are LCO (lipo-chitin oligosaccharide), a modified beta-1,4-linked N-acetylglucosamine oligosaccharide. This subunit is responsible for energy coupling to the transport system. This is Nod factor export ATP-binding protein I from Mesorhizobium japonicum (strain LMG 29417 / CECT 9101 / MAFF 303099) (Mesorhizobium loti (strain MAFF 303099)).